Reading from the N-terminus, the 711-residue chain is Constitutive ornithine decarboxylase (711 aa).

Lys347 carries the post-translational modification N6-(pyridoxal phosphate)lysine.

It belongs to the Orn/Lys/Arg decarboxylase class-I family. The cofactor is pyridoxal 5'-phosphate.

The enzyme catalyses L-ornithine + H(+) = putrescine + CO2. It functions in the pathway amine and polyamine biosynthesis; putrescine biosynthesis via L-ornithine pathway; putrescine from L-ornithine: step 1/1. The polypeptide is Constitutive ornithine decarboxylase (speC) (Escherichia coli (strain K12)).